The following is a 301-amino-acid chain: MNSPLPDVALTEVSSALIALDWVGMQGVEVPLTLGEQGATHPVHAYADLQVDLTDPSVKGIHMSRLYRLLDGFAEHQVLTPETLSALLEAMVESHVDCHSSGARITLTFNLLCRRPALVTEGLSGWKSYPVKLEAVWRAGRLCLDVSADITYSSTCPCSAALSRQLLEEAFVARFGRQSFVDPMQVAAWLRENASYATPHSQRSVATVQVRVAEQATEMGLMALIDTVEQALGTPVQTAVKRADEQAFARLNGQNLMYVEDAARKIQQALEGRYPASSVSVRHFESLHPHDAAAQTSSYLS.

The protein belongs to the GTP cyclohydrolase IV family.

It catalyses the reaction GTP + H2O = 7,8-dihydroneopterin 3'-triphosphate + formate + H(+). The protein operates within cofactor biosynthesis; 7,8-dihydroneopterin triphosphate biosynthesis; 7,8-dihydroneopterin triphosphate from GTP: step 1/1. Its function is as follows. Converts GTP to 7,8-dihydroneopterin triphosphate. The polypeptide is GTP cyclohydrolase FolE2 (Pseudomonas syringae pv. tomato (strain ATCC BAA-871 / DC3000)).